Consider the following 431-residue polypeptide: Transcription factor Sp7 (431 aa).

Positions 30–56 are disordered; the sequence is SSPLRDSTTLGKAGTKKPYSVGSDLSA. An N6-propionyllysine mark is found at Lys-41 and Lys-45. Residue Lys-58 forms a Glycyl lysine isopeptide (Lys-Gly) (interchain with G-Cter in ubiquitin) linkage. Disordered stretches follow at residues 71 to 115 and 154 to 260; these read TNGL…VPKG and TPTP…SGGY. Positions 156-164 match the 9aaTAD motif; the sequence is TPWWDMHPG. Residues 166-178 show a composition bias toward gly residues; sequence NWLGGGQGQGDGL. Lys-230 is covalently cross-linked (Glycyl lysine isopeptide (Lys-Gly) (interchain with G-Cter in ubiquitin)). C2H2-type zinc fingers lie at residues 294-318, 324-348, and 354-376; these read HSCH…LRWH, FVCN…VRTH, and FTCL…QRTH. N6-propionyllysine occurs at positions 361 and 371. Residues 367–431 are disordered; the sequence is DHLSKHQRTH…SPEQSNLLEI (65 aa). Residues 403–412 are compositionally biased toward polar residues; that stretch reads SQTPRPSASP.

It belongs to the Sp1 C2H2-type zinc-finger protein family. As to quaternary structure, interacts with RIOX1; the interaction is direct and inhibits transcription activator activity. Ubiquitination at leads to proteasomal degradation. SP7 is a short-live protein with an endogenous half-life of approximately 12 hours. Post-translationally, propionylated. Depropionylation at Lys-371 by SIRT7 activates transcription factor activity and positively regulates bone formation by osteoblasts. Restricted to bone-derived cell.

Its subcellular location is the nucleus. In terms of biological role, transcriptional activator essential for osteoblast differentiation. Binds to SP1 and EKLF consensus sequences and to other G/C-rich sequences. The chain is Transcription factor Sp7 (SP7) from Homo sapiens (Human).